A 1346-amino-acid chain; its full sequence is Proline-rich protein 36 (1346 aa).

6 disordered regions span residues M1–I403, S426–P512, P537–L606, P633–L679, L711–A1155, and P1168–K1240. Positions A10–T26 are enriched in low complexity. Positions P27–T40 are enriched in pro residues. Composition is skewed to low complexity over residues P41–R55 and S86–S97. Over residues S137–K152 the composition is skewed to basic and acidic residues. The segment covering S165–A177 has biased composition (low complexity). Positions R191 to E203 are enriched in pro residues. The span at S208–P220 shows a compositional bias: polar residues. 2 stretches are compositionally biased toward low complexity: residues Q235 to S255 and A293 to T312. Composition is skewed to pro residues over residues A329–A343, P371–P380, and P387–V397. Low complexity predominate over residues S426 to L464. Pro residues predominate over residues T494–P506. Positions P546–P558 are enriched in low complexity. The segment covering L559–A578 has biased composition (pro residues). Positions P633 to A647 are enriched in polar residues. Pro residues predominate over residues S648 to Q657. Low complexity predominate over residues A658 to L679. The segment covering T724 to P733 has biased composition (polar residues). Composition is skewed to pro residues over residues E781–A821 and P829–S865. Residues P866–P875 are compositionally biased toward low complexity. Pro residues-rich tracts occupy residues F887–A917, L926–S997, and A1004–A1015. Low complexity-rich tracts occupy residues F1029–L1046, D1137–A1146, and G1224–P1239. A Phosphoserine modification is found at S1310.

This chain is Proline-rich protein 36, found in Homo sapiens (Human).